The following is an 87-amino-acid chain: MRLHLLLLILLLFSILLSPVRGGLGPAEGHCLNLFGVCRTDVCNIVEDQIGACRRRMKCCRAWWILMPIPTPLIMSDYQEPLKPNLK.

Positions 1-22 (MRLHLLLLILLLFSILLSPVRG) are cleaved as a signal peptide. Intrachain disulfides connect Cys31/Cys59, Cys38/Cys53, and Cys43/Cys60.

Belongs to the beta-defensin family.

It is found in the secreted. Has antibacterial activity. This is Beta-defensin 109C (DEFB109C) from Homo sapiens (Human).